The following is a 1444-amino-acid chain: ABC transporter G family member 39 (1444 aa).

The interval 1-36 (MDIVRMGSVASGGGSVRRTASSWRGTSGRSDAFGRS) is disordered. The segment covering 19–29 (TASSWRGTSGR) has biased composition (polar residues). The ABC transporter 1 domain maps to 154–426 (LSAMRIVSSG…FEAMGFKCPE (273 aa)). 187 to 194 (GPPGSGKT) is an ATP binding site. The 214-residue stretch at 504-717 (ELTKACFSRE…AQNAIAVNEF (214 aa)) folds into the ABC transmembrane type-2 1 domain. 6 helical membrane-spanning segments follow: residues 522–542 (FVYI…MTVF), 555–575 (GAIF…NGFA), 610–630 (IPIS…VMGF), 642–662 (VLLV…AALG), 667–687 (VADT…GFLI), and 754–774 (IGVG…ILFL). Positions 846-1098 (ITFDNIRYSV…HLINYFEGIQ (253 aa)) constitute an ABC transporter 2 domain. ATP is bound at residue 891–898 (GVSGAGKT). The ABC transmembrane type-2 2 domain occupies 1171-1385 (TQCMACLWKQ…TLYGLVASQY (215 aa)). 7 consecutive transmembrane segments (helical) span residues 1192–1212 (ATRI…FLNL), 1220–1240 (LDLF…GIQN), 1278–1298 (IPHI…LIGF), 1305–1325 (FFWY…YGMM), 1335–1355 (IAAI…GFLI), 1362–1382 (IWWR…GLVA), and 1414–1434 (LGYV…VFAF).

Belongs to the ABC transporter superfamily. ABCG family. PDR (TC 3.A.1.205) subfamily.

Its subcellular location is the membrane. In terms of biological role, may be a general defense protein. In Oryza sativa subsp. japonica (Rice), this protein is ABC transporter G family member 39.